The primary structure comprises 353 residues: Phosphate acyltransferase (353 aa).

It belongs to the PlsX family. As to quaternary structure, homodimer. Probably interacts with PlsY.

It localises to the cytoplasm. It catalyses the reaction a fatty acyl-[ACP] + phosphate = an acyl phosphate + holo-[ACP]. It functions in the pathway lipid metabolism; phospholipid metabolism. Functionally, catalyzes the reversible formation of acyl-phosphate (acyl-PO(4)) from acyl-[acyl-carrier-protein] (acyl-ACP). This enzyme utilizes acyl-ACP as fatty acyl donor, but not acyl-CoA. The polypeptide is Phosphate acyltransferase (Rhodopseudomonas palustris (strain HaA2)).